Consider the following 528-residue polypeptide: Sensory rhodopsin I transducer (528 aa).

2 helical membrane-spanning segments follow: residues 11 to 31 (GAKL…VGVV) and 35 to 55 (VAST…INAA). HAMP domains are found at residues 55 to 107 (AETV…DRLS) and 142 to 195 (TAYQ…ETIE). In terms of domain architecture, Methyl-accepting transducer spans 214–455 (TSRRVQQEVD…ATADSIADVT (242 aa)). At Glu259 the chain carries Glutamate methyl ester (Glu).

Belongs to the methyl-accepting chemotaxis (MCP) protein family. In terms of assembly, interacts with Sop1.

The protein localises to the cell membrane. Functionally, transduces signals from the phototaxis receptor sensory rhodopsin I (Sop1). The sequence is that of Sensory rhodopsin I transducer (htr1) from Haloarcula marismortui (strain ATCC 43049 / DSM 3752 / JCM 8966 / VKM B-1809) (Halobacterium marismortui).